The following is a 245-amino-acid chain: Acetylglutamate kinase (245 aa).

Substrate-binding positions include 41–42 (GG), R63, and N156.

Belongs to the acetylglutamate kinase family. ArgB subfamily.

Its subcellular location is the cytoplasm. It catalyses the reaction N-acetyl-L-glutamate + ATP = N-acetyl-L-glutamyl 5-phosphate + ADP. It participates in amino-acid biosynthesis; L-arginine biosynthesis; N(2)-acetyl-L-ornithine from L-glutamate: step 2/4. In terms of biological role, catalyzes the ATP-dependent phosphorylation of N-acetyl-L-glutamate. The protein is Acetylglutamate kinase of Leuconostoc citreum (strain KM20).